A 425-amino-acid polypeptide reads, in one-letter code: Serine--tRNA ligase (425 aa).

232-234 (TAE) contributes to the L-serine binding site. ATP contacts are provided by residues 263–265 (RRE) and valine 279. Glutamate 286 contacts L-serine. 350–353 (EVVS) contacts ATP. Residue threonine 387 coordinates L-serine.

It belongs to the class-II aminoacyl-tRNA synthetase family. Type-1 seryl-tRNA synthetase subfamily. Homodimer. The tRNA molecule binds across the dimer.

It is found in the cytoplasm. The enzyme catalyses tRNA(Ser) + L-serine + ATP = L-seryl-tRNA(Ser) + AMP + diphosphate + H(+). The catalysed reaction is tRNA(Sec) + L-serine + ATP = L-seryl-tRNA(Sec) + AMP + diphosphate + H(+). It participates in aminoacyl-tRNA biosynthesis; selenocysteinyl-tRNA(Sec) biosynthesis; L-seryl-tRNA(Sec) from L-serine and tRNA(Sec): step 1/1. In terms of biological role, catalyzes the attachment of serine to tRNA(Ser). Is also able to aminoacylate tRNA(Sec) with serine, to form the misacylated tRNA L-seryl-tRNA(Sec), which will be further converted into selenocysteinyl-tRNA(Sec). This is Serine--tRNA ligase from Methanocorpusculum labreanum (strain ATCC 43576 / DSM 4855 / Z).